The following is a 190-amino-acid chain: Large ribosomal subunit protein uL5 (190 aa).

The protein belongs to the universal ribosomal protein uL5 family. Part of the 50S ribosomal subunit; part of the 5S rRNA/L5/L18/L25 subcomplex. Contacts the 5S rRNA and the P site tRNA. Forms a bridge to the 30S subunit in the 70S ribosome.

Its function is as follows. This is one of the proteins that bind and probably mediate the attachment of the 5S RNA into the large ribosomal subunit, where it forms part of the central protuberance. In the 70S ribosome it contacts protein S13 of the 30S subunit (bridge B1b), connecting the 2 subunits; this bridge is implicated in subunit movement. Contacts the P site tRNA; the 5S rRNA and some of its associated proteins might help stabilize positioning of ribosome-bound tRNAs. This chain is Large ribosomal subunit protein uL5, found in Blochmanniella floridana.